Here is a 72-residue protein sequence, read N- to C-terminus: Translation initiation factor IF-1 (72 aa).

An S1-like domain is found at 1 to 72 (MTKEENIEMQ…SKGRIIFRSR (72 aa)).

The protein belongs to the IF-1 family. Component of the 30S ribosomal translation pre-initiation complex which assembles on the 30S ribosome in the order IF-2 and IF-3, IF-1 and N-formylmethionyl-tRNA(fMet); mRNA recruitment can occur at any time during PIC assembly.

The protein resides in the cytoplasm. In terms of biological role, one of the essential components for the initiation of protein synthesis. Stabilizes the binding of IF-2 and IF-3 on the 30S subunit to which N-formylmethionyl-tRNA(fMet) subsequently binds. Helps modulate mRNA selection, yielding the 30S pre-initiation complex (PIC). Upon addition of the 50S ribosomal subunit IF-1, IF-2 and IF-3 are released leaving the mature 70S translation initiation complex. This chain is Translation initiation factor IF-1, found in Wigglesworthia glossinidia brevipalpis.